The sequence spans 393 residues: NADH-quinone oxidoreductase subunit D (393 aa).

The protein belongs to the complex I 49 kDa subunit family. As to quaternary structure, NDH-1 is composed of 14 different subunits. Subunits NuoB, C, D, E, F, and G constitute the peripheral sector of the complex.

It is found in the cell inner membrane. It catalyses the reaction a quinone + NADH + 5 H(+)(in) = a quinol + NAD(+) + 4 H(+)(out). In terms of biological role, NDH-1 shuttles electrons from NADH, via FMN and iron-sulfur (Fe-S) centers, to quinones in the respiratory chain. The immediate electron acceptor for the enzyme in this species is believed to be ubiquinone. Couples the redox reaction to proton translocation (for every two electrons transferred, four hydrogen ions are translocated across the cytoplasmic membrane), and thus conserves the redox energy in a proton gradient. The polypeptide is NADH-quinone oxidoreductase subunit D (Ehrlichia chaffeensis (strain ATCC CRL-10679 / Arkansas)).